The sequence spans 70 residues: MIIPWQDIAPETLENLIREFVLREGTDYGSVEVSLQSKIDQVKSQLEKGEAVIVFSELHETVDIQLKAKF.

It belongs to the UPF0270 family.

This Vibrio campbellii (strain ATCC BAA-1116) protein is UPF0270 protein VIBHAR_00073.